A 552-amino-acid chain; its full sequence is Chaperonin GroEL (552 aa).

ATP is bound by residues 30-33 (TLGP), Lys51, 87-91 (DGTTT), Gly415, 480-482 (NAA), and Asp496.

It belongs to the chaperonin (HSP60) family. Forms a cylinder of 14 subunits composed of two heptameric rings stacked back-to-back. Interacts with the co-chaperonin GroES.

It localises to the cytoplasm. It carries out the reaction ATP + H2O + a folded polypeptide = ADP + phosphate + an unfolded polypeptide.. In terms of biological role, together with its co-chaperonin GroES, plays an essential role in assisting protein folding. The GroEL-GroES system forms a nano-cage that allows encapsulation of the non-native substrate proteins and provides a physical environment optimized to promote and accelerate protein folding. The sequence is that of Chaperonin GroEL from Coxiella burnetii (strain RSA 493 / Nine Mile phase I).